The following is a 174-amino-acid chain: RNA pyrophosphohydrolase (174 aa).

The Nudix hydrolase domain occupies 6–149; that stretch reads GFRANVGIII…KRDVYRKVMK (144 aa). The Nudix box signature appears at 38-59; it reads GGVDDGESAEEAMYRELYEEVG.

Belongs to the Nudix hydrolase family. RppH subfamily. The cofactor is a divalent metal cation.

Functionally, accelerates the degradation of transcripts by removing pyrophosphate from the 5'-end of triphosphorylated RNA, leading to a more labile monophosphorylated state that can stimulate subsequent ribonuclease cleavage. The sequence is that of RNA pyrophosphohydrolase from Shewanella sp. (strain W3-18-1).